Here is a 106-residue protein sequence, read N- to C-terminus: BLOC-1-related complex subunit 7 (106 aa).

The protein belongs to the BORCS7 family. Component of the BLOC-one-related complex (BORC) which is composed of BLOC1S1, BLOC1S2, BORCS5, BORCS6, BORCS7, BORCS8, KXD1 and SNAPIN.

The protein resides in the lysosome membrane. As part of the BORC complex may play a role in lysosomes movement and localization at the cell periphery. Associated with the cytosolic face of lysosomes, the BORC complex may recruit ARL8B and couple lysosomes to microtubule plus-end-directed kinesin motor. The protein is BLOC-1-related complex subunit 7 of Pongo abelii (Sumatran orangutan).